The sequence spans 998 residues: Bifunctional glutamine synthetase adenylyltransferase/adenylyl-removing enzyme (998 aa).

An adenylyl removase region spans residues 1–487 (MVVTKPATQR…LHAKLFYQPL (487 aa)). Positions 492–998 (GPAGLEIRHG…KAVVCKVFGS (507 aa)) are adenylyl transferase.

This sequence belongs to the GlnE family. Mg(2+) is required as a cofactor.

The catalysed reaction is [glutamine synthetase]-O(4)-(5'-adenylyl)-L-tyrosine + phosphate = [glutamine synthetase]-L-tyrosine + ADP. It catalyses the reaction [glutamine synthetase]-L-tyrosine + ATP = [glutamine synthetase]-O(4)-(5'-adenylyl)-L-tyrosine + diphosphate. Functionally, involved in the regulation of glutamine synthetase GlnA, a key enzyme in the process to assimilate ammonia. When cellular nitrogen levels are high, the C-terminal adenylyl transferase (AT) inactivates GlnA by covalent transfer of an adenylyl group from ATP to specific tyrosine residue of GlnA, thus reducing its activity. Conversely, when nitrogen levels are low, the N-terminal adenylyl removase (AR) activates GlnA by removing the adenylyl group by phosphorolysis, increasing its activity. The regulatory region of GlnE binds the signal transduction protein PII (GlnB) which indicates the nitrogen status of the cell. The polypeptide is Bifunctional glutamine synthetase adenylyltransferase/adenylyl-removing enzyme (Mycolicibacterium paratuberculosis (strain ATCC BAA-968 / K-10) (Mycobacterium paratuberculosis)).